The primary structure comprises 867 residues: Protein translocase subunit SecA 1 (867 aa).

ATP-binding positions include Gln86, 104–108 (GEGKT), and Asp493.

This sequence belongs to the SecA family. As to quaternary structure, monomer and homodimer. Part of the essential Sec protein translocation apparatus which comprises SecA, SecYEG and auxiliary proteins SecDF. Other proteins may also be involved.

The protein localises to the cell membrane. It localises to the cytoplasm. It carries out the reaction ATP + H2O + cellular proteinSide 1 = ADP + phosphate + cellular proteinSide 2.. Functionally, part of the Sec protein translocase complex. Interacts with the SecYEG preprotein conducting channel. Has a central role in coupling the hydrolysis of ATP to the transfer of proteins into and across the cell membrane, serving as an ATP-driven molecular motor driving the stepwise translocation of polypeptide chains across the membrane. The sequence is that of Protein translocase subunit SecA 1 from Corynebacterium jeikeium (strain K411).